Reading from the N-terminus, the 230-residue chain is Probable fimbrial chaperone SfmC (230 aa).

The first 23 residues, 1 to 23 (MMTKIKLLMLIIFYLIISASAHA), serve as a signal peptide directing secretion.

The protein belongs to the periplasmic pilus chaperone family.

It localises to the periplasm. Part of the sfmACDHF fimbrial operon. Could contribute to adhesion to various surfaces in specific environmental niches. Increases adhesion to eukaryotic T24 bladder epithelial cells in the absence of fim genes. This chain is Probable fimbrial chaperone SfmC (sfmC), found in Escherichia coli (strain K12).